The primary structure comprises 496 residues: Gasdermin-E (496 aa).

The interval methionine 1–leucine 56 is membrane targeting domain. The residue at position 45 (cysteine 45) is an S-(2-succinyl)cysteine. Lysine 120 is covalently cross-linked (Glycyl lysine isopeptide (Lys-Gly) (interchain with G-Cter in ubiquitin)). S-(2-succinyl)cysteine is present on residues cysteine 156, cysteine 168, and cysteine 180. Lysine 189 participates in a covalent cross-link: Glycyl lysine isopeptide (Lys-Gly) (interchain with G-Cter in ubiquitin). S-(2-succinyl)cysteine is present on residues cysteine 235, cysteine 371, cysteine 408, cysteine 417, and cysteine 489.

It belongs to the gasdermin family. In terms of assembly, homooligomer; homooligomeric ring-shaped pore complex containing 27-28 subunits when inserted in the membrane. Post-translationally, cleavage at Asp-270 by CASP3 (mature and uncleaved precursor forms) or granzyme B (GZMB) relieves autoinhibition and is sufficient to initiate pyroptosis. Succination by the Krebs cycle intermediate fumarate, which leads to S-(2-succinyl)cysteine residues, inhibits processing by caspases, and ability to initiate pyroptosis. Succination modification is catalyzed by a non-enzymatic reaction caused by an accumulation of fumarate. In terms of processing, ubiquitinated at Lys-120 and Lys-189 via 'Lys-48'-linked polyubiquitin chains, leading to proteasomal degradation. Deubiquitinated by USP48, leading to increased stability. Post-translationally, palmitoylated. In terms of tissue distribution, expressed in cochlea. Low level of expression in heart, brain, placenta, lung, liver, skeletal muscle, kidney and pancreas, with highest expression in placenta.

It localises to the cell membrane. Its subcellular location is the cytoplasm. The protein localises to the cytosol. Its activity is regulated as follows. The full-length protein before cleavage is inactive: intramolecular interactions between N- and C-terminal domains mediate autoinhibition in the absence of activation signal. The intrinsic pyroptosis-inducing activity is carried by the released N-terminal moiety (Gasdermin-E, N-terminal) following cleavage by CASP3 or granzyme B (GZMB). Activated by NLRP1 in the absence of GSDMD expression: NLRP1 cleaves and activates CASP8, promoting downstream activation of CASP3 and subsequent activation of GSDME. (Microbial infection) Activated upon human coronavirus SARS-CoV-2 infection, leading to lung epithelial cell death. Activation takes place in response to (1) activation of NLRP1 and (2) inactivation of GSDMD following NLRP1 and GSDMD cleavage by the SARS-CoV-2 3C-like proteinase nsp5. Precursor of a pore-forming protein that converts non-inflammatory apoptosis to pyroptosis. This form constitutes the precursor of the pore-forming protein: upon cleavage, the released N-terminal moiety (Gasdermin-E, N-terminal) binds to membranes and forms pores, triggering pyroptosis. In terms of biological role, pore-forming protein produced by cleavage by CASP3 or granzyme B (GZMB), which converts non-inflammatory apoptosis to pyroptosis or promotes granzyme-mediated pyroptosis, respectively. After cleavage, moves to the plasma membrane, homooligomerizes within the membrane and forms pores of 10-15 nanometers (nm) of inner diameter, allowing the release of mature interleukins (IL1B and IL16) and triggering pyroptosis. Binds to inner leaflet lipids, bisphosphorylated phosphatidylinositols, such as phosphatidylinositol (4,5)-bisphosphate. Cleavage by CASP3 switches CASP3-mediated apoptosis induced by TNF or danger signals, such as chemotherapy drugs, to pyroptosis. Mediates secondary necrosis downstream of the mitochondrial apoptotic pathway and CASP3 activation as well as in response to viral agents. Exhibits bactericidal activity. Cleavage by GZMB promotes tumor suppressor activity by triggering robust anti-tumor immunity. Suppresses tumors by mediating granzyme-mediated pyroptosis in target cells of natural killer (NK) cells: cleavage by granzyme B (GZMB), delivered to target cells from NK-cells, triggers pyroptosis of tumor cells and tumor suppression. May play a role in the p53/TP53-regulated cellular response to DNA damage. Its function is as follows. (Microbial infection) Pore-forming protein, which promotes maternal placental pyroptosis in response to Zika virus infection, contributing to adverse fetal outcomes. The polypeptide is Gasdermin-E (Homo sapiens (Human)).